The primary structure comprises 131 residues: Small ribosomal subunit protein uS8 (131 aa).

The protein belongs to the universal ribosomal protein uS8 family. Part of the 30S ribosomal subunit. Contacts proteins S5 and S12.

Its function is as follows. One of the primary rRNA binding proteins, it binds directly to 16S rRNA central domain where it helps coordinate assembly of the platform of the 30S subunit. This is Small ribosomal subunit protein uS8 from Campylobacter fetus subsp. fetus (strain 82-40).